We begin with the raw amino-acid sequence, 115 residues long: NAD(P)H-quinone oxidoreductase subunit M (115 aa).

Belongs to the complex I NdhM subunit family. As to quaternary structure, NDH-1 can be composed of about 15 different subunits; different subcomplexes with different compositions have been identified which probably have different functions.

The protein resides in the cellular thylakoid membrane. It carries out the reaction a plastoquinone + NADH + (n+1) H(+)(in) = a plastoquinol + NAD(+) + n H(+)(out). The catalysed reaction is a plastoquinone + NADPH + (n+1) H(+)(in) = a plastoquinol + NADP(+) + n H(+)(out). Its function is as follows. NDH-1 shuttles electrons from an unknown electron donor, via FMN and iron-sulfur (Fe-S) centers, to quinones in the respiratory and/or the photosynthetic chain. The immediate electron acceptor for the enzyme in this species is believed to be plastoquinone. Couples the redox reaction to proton translocation, and thus conserves the redox energy in a proton gradient. Cyanobacterial NDH-1 also plays a role in inorganic carbon-concentration. This Prochlorococcus marinus (strain MIT 9301) protein is NAD(P)H-quinone oxidoreductase subunit M.